A 275-amino-acid polypeptide reads, in one-letter code: Myb/SANT-like DNA-binding domain-containing protein 3 (275 aa).

One can recognise a Myb-like domain in the interval 13–78 (FSELEKSILL…QLKKCWENIK (66 aa)). Phosphoserine is present on residues Ser-96 and Ser-98. Lys-154 is covalently cross-linked (Glycyl lysine isopeptide (Lys-Gly) (interchain with G-Cter in SUMO2)). Residues 211 to 247 (QLIQMNEVHVAKIQQIERECEMAEEEHRIKMEVLNKK) adopt a coiled-coil conformation. Residue Ser-274 is modified to Phosphoserine.

This sequence belongs to the MSANTD3 family.

This Bos taurus (Bovine) protein is Myb/SANT-like DNA-binding domain-containing protein 3 (MSANTD3).